A 1416-amino-acid chain; its full sequence is DNA-directed RNA polymerase subunit beta (1416 aa).

The segment at 1388–1416 (AKAAREQAEGELGGPLGTPRGAAAEKNTA) is disordered.

Belongs to the RNA polymerase beta chain family. The RNAP catalytic core consists of 2 alpha, 1 beta, 1 beta' and 1 omega subunit. When a sigma factor is associated with the core the holoenzyme is formed, which can initiate transcription.

It carries out the reaction RNA(n) + a ribonucleoside 5'-triphosphate = RNA(n+1) + diphosphate. DNA-dependent RNA polymerase catalyzes the transcription of DNA into RNA using the four ribonucleoside triphosphates as substrates. The protein is DNA-directed RNA polymerase subunit beta of Anaeromyxobacter sp. (strain Fw109-5).